The chain runs to 275 residues: MSSTVEFDPQSRPTEADAYAQTSLPEVLPELVKQSLPKHVAIIMDGNGRWAQTQGKPRVMGHKAGVKAVRRAVSAASQLGIQSLTLFAFSSENWRRPDKEVSLLMELFFTVLQREIKLLDKNQVKLNIIGDISRFSARLQKQIRAAEEKTAGNSGLILNVAANYGGRWDILQAAQKLAEKVETGEMTSSQFTEEALSEHLCMQNQSEVDLIIRTGGDYRISNFVLWQAAYAELVFLDTLWPDFDEQAFHEAIATFANRQRRFGLTGSQIDEMRAL.

The active site involves Asp-45. Residue Asp-45 coordinates Mg(2+). Residues 46–49 (GNGR), Trp-50, Arg-58, His-62, and 90–92 (SSE) contribute to the substrate site. The active-site Proton acceptor is Asn-93. Substrate contacts are provided by residues Trp-94, Arg-96, Arg-213, and 219–221 (RIS). Position 232 (Glu-232) interacts with Mg(2+).

This sequence belongs to the UPP synthase family. Homodimer. It depends on Mg(2+) as a cofactor.

It catalyses the reaction 8 isopentenyl diphosphate + (2E,6E)-farnesyl diphosphate = di-trans,octa-cis-undecaprenyl diphosphate + 8 diphosphate. In terms of biological role, catalyzes the sequential condensation of isopentenyl diphosphate (IPP) with (2E,6E)-farnesyl diphosphate (E,E-FPP) to yield (2Z,6Z,10Z,14Z,18Z,22Z,26Z,30Z,34E,38E)-undecaprenyl diphosphate (di-trans,octa-cis-UPP). UPP is the precursor of glycosyl carrier lipid in the biosynthesis of bacterial cell wall polysaccharide components such as peptidoglycan and lipopolysaccharide. This is Ditrans,polycis-undecaprenyl-diphosphate synthase ((2E,6E)-farnesyl-diphosphate specific) from Shewanella oneidensis (strain ATCC 700550 / JCM 31522 / CIP 106686 / LMG 19005 / NCIMB 14063 / MR-1).